Consider the following 172-residue polypeptide: Adenine phosphoribosyltransferase (172 aa).

Belongs to the purine/pyrimidine phosphoribosyltransferase family. As to quaternary structure, homodimer.

The protein resides in the cytoplasm. The enzyme catalyses AMP + diphosphate = 5-phospho-alpha-D-ribose 1-diphosphate + adenine. It participates in purine metabolism; AMP biosynthesis via salvage pathway; AMP from adenine: step 1/1. Functionally, catalyzes a salvage reaction resulting in the formation of AMP, that is energically less costly than de novo synthesis. This Hydrogenovibrio crunogenus (strain DSM 25203 / XCL-2) (Thiomicrospira crunogena) protein is Adenine phosphoribosyltransferase.